The following is an 81-amino-acid chain: MQNEEGKTVDLYVPRKCSATNRIITAKDHASVQINIGHLDANGLYDGHFTTFALSGFVRAQGDADSSLDRLWQKKKAEIKQ.

It belongs to the eukaryotic ribosomal protein eS21 family.

This is Small ribosomal subunit protein eS21 (RPS21) from Zea mays (Maize).